The sequence spans 356 residues: MSELKNDRFLRALMRQPVDVTPVWMMRQAGRYLPEYRASRARAGSFMDLCKNAEFACEVTLQPLERFELDAAILFSDILTIPDAMGLGLYFETGEGPRFKKTVRTEADVNALHMPDADTDLGYVMNAVRTIRRELNGRVPLIGFSGSPWTLATYMVEGGSSKDFREIKKLAYGQPELLHLLLDKLADSVADYLNAQIRAGAQAVQIFDTWGGALTAAGYLEFSLAYMKKIVSKLQREADGRPVPVILFTKNGGQWLEHIADAGADALGLDWTTEISEARRRVGDRVSLQGNMDPAALYAPPAAIRDQVSRILASFGSGSGHVFNLGHGITPDVDPEHAKVFIDAVHELSAPYHQNA.

Substrate is bound by residues 27–31 (RQAGR), aspartate 77, tyrosine 154, threonine 209, and histidine 327.

The protein belongs to the uroporphyrinogen decarboxylase family. As to quaternary structure, homodimer.

The protein localises to the cytoplasm. It carries out the reaction uroporphyrinogen III + 4 H(+) = coproporphyrinogen III + 4 CO2. Its pathway is porphyrin-containing compound metabolism; protoporphyrin-IX biosynthesis; coproporphyrinogen-III from 5-aminolevulinate: step 4/4. Its function is as follows. Catalyzes the decarboxylation of four acetate groups of uroporphyrinogen-III to yield coproporphyrinogen-III. The protein is Uroporphyrinogen decarboxylase of Hahella chejuensis (strain KCTC 2396).